Consider the following 528-residue polypeptide: Na(+)/H(+) antiporter NhaB (528 aa).

10 consecutive transmembrane segments (helical) span residues W20–N39, P66–L86, L97–F117, A139–V159, I241–V261, A304–I324, E349–I369, L390–G410, A448–I468, and V476–L496.

It belongs to the NhaB Na(+)/H(+) (TC 2.A.34) antiporter family.

The protein resides in the cell inner membrane. It carries out the reaction 2 Na(+)(in) + 3 H(+)(out) = 2 Na(+)(out) + 3 H(+)(in). In terms of biological role, na(+)/H(+) antiporter that extrudes sodium in exchange for external protons. This Shewanella pealeana (strain ATCC 700345 / ANG-SQ1) protein is Na(+)/H(+) antiporter NhaB.